A 1755-amino-acid chain; its full sequence is Transposon Ty1-DR5 Gag-Pol polyprotein (1755 aa).

Composition is skewed to polar residues over residues methionine 1–proline 10, threonine 48–serine 60, and glutamine 127–phenylalanine 152. 3 disordered regions span residues methionine 1–glutamine 93, proline 126–proline 173, and glycine 352–threonine 421. Residues threonine 153–threonine 165 show a composition bias toward low complexity. Positions asparagine 299–histidine 401 are RNA-binding. Positions asparagine 402 to serine 418 are enriched in low complexity. The active-site For protease activity; shared with dimeric partner is the aspartate 461. The integrase-type zinc finger-like stretch occupies residues asparagine 583 to cysteine 640. An Integrase catalytic domain is found at asparagine 660–proline 835. Aspartate 671 and aspartate 736 together coordinate Mg(2+). Disordered stretches follow at residues serine 956–lysine 1087, arginine 1092–proline 1111, and aspartate 1130–threonine 1187. The span at serine 960 to threonine 969 shows a compositional bias: low complexity. The span at serine 1005–threonine 1015 shows a compositional bias: polar residues. Residues glutamate 1038 to serine 1053 are compositionally biased toward basic and acidic residues. Polar residues-rich tracts occupy residues tyrosine 1054–aspartate 1082 and proline 1101–proline 1111. Positions lysine 1178–arginine 1212 match the Bipartite nuclear localization signal motif. The region spanning asparagine 1338 to glutamine 1476 is the Reverse transcriptase Ty1/copia-type domain. Residues aspartate 1346, aspartate 1427, aspartate 1428, aspartate 1610, glutamate 1652, and aspartate 1685 each coordinate Mg(2+). An RNase H Ty1/copia-type domain is found at aspartate 1610–lysine 1752.

In terms of assembly, the capsid protein forms a homotrimer, from which the VLPs are assembled. The protease is a homodimer, whose active site consists of two apposed aspartic acid residues. Post-translationally, initially, virus-like particles (VLPs) are composed of the structural unprocessed proteins Gag and Gag-Pol, and also contain the host initiator methionine tRNA (tRNA(i)-Met) which serves as a primer for minus-strand DNA synthesis, and a dimer of genomic Ty RNA. Processing of the polyproteins occurs within the particle and proceeds by an ordered pathway, called maturation. First, the protease (PR) is released by autocatalytic cleavage of the Gag-Pol polyprotein yielding capsid protein p45 and a Pol-p154 precursor protein. This cleavage is a prerequisite for subsequent processing of Pol-p154 at the remaining sites to release the mature structural and catalytic proteins. Maturation takes place prior to the RT reaction and is required to produce transposition-competent VLPs.

It is found in the cytoplasm. Its subcellular location is the nucleus. The enzyme catalyses DNA(n) + a 2'-deoxyribonucleoside 5'-triphosphate = DNA(n+1) + diphosphate. It carries out the reaction Endonucleolytic cleavage to 5'-phosphomonoester.. Capsid protein (CA) is the structural component of the virus-like particle (VLP), forming the shell that encapsulates the retrotransposons dimeric RNA genome. The particles are assembled from trimer-clustered units and there are holes in the capsid shells that allow for the diffusion of macromolecules. CA also has nucleocapsid-like chaperone activity, promoting primer tRNA(i)-Met annealing to the multipartite primer-binding site (PBS), dimerization of Ty1 RNA and initiation of reverse transcription. In terms of biological role, the aspartyl protease (PR) mediates the proteolytic cleavages of the Gag and Gag-Pol polyproteins after assembly of the VLP. Functionally, reverse transcriptase/ribonuclease H (RT) is a multifunctional enzyme that catalyzes the conversion of the retro-elements RNA genome into dsDNA within the VLP. The enzyme displays a DNA polymerase activity that can copy either DNA or RNA templates, and a ribonuclease H (RNase H) activity that cleaves the RNA strand of RNA-DNA heteroduplexes during plus-strand synthesis and hydrolyzes RNA primers. The conversion leads to a linear dsDNA copy of the retrotransposon that includes long terminal repeats (LTRs) at both ends. Its function is as follows. Integrase (IN) targets the VLP to the nucleus, where a subparticle preintegration complex (PIC) containing at least integrase and the newly synthesized dsDNA copy of the retrotransposon must transit the nuclear membrane. Once in the nucleus, integrase performs the integration of the dsDNA into the host genome. This is Transposon Ty1-DR5 Gag-Pol polyprotein (TY1B-DR5) from Saccharomyces cerevisiae (strain ATCC 204508 / S288c) (Baker's yeast).